The sequence spans 122 residues: MGNLIKELQDEQLRKEDLEDFRVGDTIRVATKIVDGGKERTQVFQGTVMARRGGGAGETVCLHRVAYGEGMEKSFLLHSPKIVGIEVVKRGKVSRARLYYLKGKTGKAAKVKEYIGPRSSKK.

This sequence belongs to the bacterial ribosomal protein bL19 family.

Its function is as follows. This protein is located at the 30S-50S ribosomal subunit interface and may play a role in the structure and function of the aminoacyl-tRNA binding site. The sequence is that of Large ribosomal subunit protein bL19 from Chlamydia felis (strain Fe/C-56) (Chlamydophila felis).